A 348-amino-acid polypeptide reads, in one-letter code: DnaJ homolog subfamily B member 5 (348 aa).

The 65-residue stretch at 4 to 68 (DYYKILGIPS…KKRGLYDQYG (65 aa)) folds into the J domain.

The chain is DnaJ homolog subfamily B member 5 (DNAJB5) from Bos taurus (Bovine).